The sequence spans 73 residues: Translation initiation factor IF-1 (73 aa).

One can recognise an S1-like domain in the interval 1-73 (MAKKEGALEL…TRGRIVYRHK (73 aa)).

Belongs to the IF-1 family. As to quaternary structure, component of the 30S ribosomal translation pre-initiation complex which assembles on the 30S ribosome in the order IF-2 and IF-3, IF-1 and N-formylmethionyl-tRNA(fMet); mRNA recruitment can occur at any time during PIC assembly.

The protein resides in the cytoplasm. Its function is as follows. One of the essential components for the initiation of protein synthesis. Stabilizes the binding of IF-2 and IF-3 on the 30S subunit to which N-formylmethionyl-tRNA(fMet) subsequently binds. Helps modulate mRNA selection, yielding the 30S pre-initiation complex (PIC). Upon addition of the 50S ribosomal subunit IF-1, IF-2 and IF-3 are released leaving the mature 70S translation initiation complex. This Cutibacterium acnes (strain DSM 16379 / KPA171202) (Propionibacterium acnes) protein is Translation initiation factor IF-1.